The chain runs to 435 residues: Angio-associated migratory cell protein (435 aa).

Residues 1-65 are disordered; sequence MESESESGAA…EEEEEGNEEG (65 aa). Residue Ser-20 is modified to Phosphoserine. The span at 39–63 shows a compositional bias: acidic residues; the sequence is DPDDLAQEMEDVDFEEEEEEEEGNE. WD repeat units follow at residues 90-130, 133-172, 174-213, 215-255, 259-300, 316-355, 357-396, and 399-434; these read LHSA…LLFE, GHKD…EVWS, EAGD…KTFQ, PNCP…HVLK, GHQG…GVFR, SESN…LRHQ, QHQS…LLTD, and GHTA…QRPD.

It localises to the cell membrane. The protein resides in the cytoplasm. Plays a role in angiogenesis and cell migration. In smooth muscle cell migration, may act through the RhoA pathway. The polypeptide is Angio-associated migratory cell protein (AAMP) (Canis lupus familiaris (Dog)).